Reading from the N-terminus, the 258-residue chain is uncharacterized protein (258 aa).

An N-terminal signal peptide occupies residues 1 to 19 (MVGILPLCCSGCVPSLCCS). Transmembrane regions (helical) follow at residues 94–114 (GLLLPCLLGVGSWLLFNNWTG), 197–217 (CLILGIFLFCFVLAVIGLPYI), and 219–239 (PGLSLSVALLWQSLILLSSLV).

The protein localises to the membrane. This is an uncharacterized protein from Homo sapiens (Human).